A 539-amino-acid chain; its full sequence is Chaperonin GroEL (539 aa).

Residues 29 to 32 (TLGP), 86 to 90 (DGTTT), G413, 479 to 481 (DAL), and D495 contribute to the ATP site.

Belongs to the chaperonin (HSP60) family. In terms of assembly, forms a cylinder of 14 subunits composed of two heptameric rings stacked back-to-back. Interacts with the co-chaperonin GroES.

The protein resides in the cytoplasm. The catalysed reaction is ATP + H2O + a folded polypeptide = ADP + phosphate + an unfolded polypeptide.. Functionally, together with its co-chaperonin GroES, plays an essential role in assisting protein folding. The GroEL-GroES system forms a nano-cage that allows encapsulation of the non-native substrate proteins and provides a physical environment optimized to promote and accelerate protein folding. This is Chaperonin GroEL from Pseudothermotoga lettingae (strain ATCC BAA-301 / DSM 14385 / NBRC 107922 / TMO) (Thermotoga lettingae).